The primary structure comprises 568 residues: General O-oligosaccharyltransferase (568 aa).

The next 12 helical transmembrane spans lie at 17 to 37 (VAVM…LAWL), 46 to 66 (LTFA…ALFL), 78 to 98 (LALP…VVDF), 101 to 121 (ALLS…GYNL), 132 to 152 (FTLS…IACI), 176 to 196 (FAQP…CLYL), 214 to 234 (IVFA…LFFI), 251 to 271 (YAVL…PRFT), 349 to 369 (LLVW…LIWI), 376 to 396 (AKTT…IHTL), 397 to 417 (LEYP…MGLI), and 429 to 449 (VPVS…ALIW).

It belongs to the PglL O-oligosaccharyltransferase family.

It localises to the cell membrane. Its function is as follows. Catalyzes the O-glycosylation of multiple protein targets. Is responsible for general protein glycosylation within A.baylyi ADP1. Does not act as an O-antigen ligase. This Acinetobacter baylyi (strain ATCC 33305 / BD413 / ADP1) protein is General O-oligosaccharyltransferase.